Consider the following 343-residue polypeptide: Diterpene cyclase DtcycB (343 aa).

3 residues coordinate Mg(2+): Asn-219, Ser-223, and Glu-227.

This sequence belongs to the terpene synthase family. In terms of assembly, homodimer. Mg(2+) serves as cofactor.

The enzyme catalyses (2E,6E,10E)-geranylgeranyl diphosphate + H2O = (R)-nephthenol + diphosphate. The catalysed reaction is (2E,6E,10E)-geranylgeranyl diphosphate = (R)-cembrene A + diphosphate. It carries out the reaction (2E,6E,10E)-geranylgeranyl diphosphate + H2O = (1S,4E,8E,12E)-2,2,5,9,13-pentamethylcyclopentadeca-4,8,12-trien-1-ol + diphosphate. Functionally, diterpene cyclases that can form multiple diterpene products. The chain is Diterpene cyclase DtcycB from Streptomyces sp.